We begin with the raw amino-acid sequence, 236 residues long: MICOS complex subunit MIC25 (236 aa).

Positions 1 to 11 (MGSAESREGRR) are enriched in basic and acidic residues. Positions 1–22 (MGSAESREGRRASFGMDEEERV) are disordered. Residue Gly-2 is the site of N-myristoyl glycine attachment. 2 positions are modified to phosphoserine: Ser-13 and Ser-31. Disordered regions lie at residues 34–86 (VVNR…VQVD) and 109–132 (EREA…DQEK). A compositionally biased stretch (low complexity) spans 48–58 (GLLAPPAAALG). Basic and acidic residues-rich tracts occupy residues 62–71 (GREKDSKPPR) and 122–132 (RRGEGGVDQEK). Residues 127–167 (GVDQEKQRLAQRARELESQEEELRCRDAFYKEQLGRLERQN) adopt a coiled-coil conformation. The region spanning 195–236 (EPVCSGLQAQILRCYRDRLQEVLLCADLVRAYQHCVSSAHKG) is the CHCH domain. Short sequence motifs (cx9C motif) lie at residues 198–208 (CSGLQAQILRC) and 219–229 (CADLVRAYQHC). Cystine bridges form between Cys-198–Cys-229 and Cys-208–Cys-219.

It belongs to the MICOS complex subunit Mic19 family. Metazoan Mic25 subfamily. In terms of assembly, component of the mitochondrial contact site and cristae organizing system (MICOS) complex, composed of at least MICOS10/MIC10, CHCHD3/MIC19, CHCHD6/MIC25, APOOL/MIC27, IMMT/MIC60, APOO/MIC23/MIC26 and MICOS13/MIC13. This complex was also known under the names MINOS or MitOS complex. The MICOS complex associates with mitochondrial outer membrane proteins SAMM50, MTX1 and MTX2 (together described as components of the mitochondrial outer membrane sorting assembly machinery (SAM) complex) and DNAJC11, mitochondrial inner membrane protein TMEM11 and with HSPA9. The MICOS and SAM complexes together with DNAJC11 are part of a large protein complex spanning both membranes termed the mitochondrial intermembrane space bridging (MIB) complex. Interacts with DISC1. Interacts with IMMT/MIC60.

The protein resides in the mitochondrion inner membrane. The protein localises to the mitochondrion. In terms of biological role, component of the MICOS complex, a large protein complex of the mitochondrial inner membrane that plays crucial roles in the maintenance of crista junctions, inner membrane architecture, and formation of contact sites to the outer membrane. The protein is MICOS complex subunit MIC25 (CHCHD6) of Bos taurus (Bovine).